Consider the following 102-residue polypeptide: NADH-quinone oxidoreductase subunit K (102 aa).

3 helical membrane-spanning segments follow: residues 6 to 26 (MEHG…GLLI), 30 to 50 (LLFI…AFVV), and 65 to 85 (ILVI…LLLL).

This sequence belongs to the complex I subunit 4L family. In terms of assembly, NDH-1 is composed of 14 different subunits. Subunits NuoA, H, J, K, L, M, N constitute the membrane sector of the complex.

The protein localises to the cell inner membrane. It catalyses the reaction a quinone + NADH + 5 H(+)(in) = a quinol + NAD(+) + 4 H(+)(out). Functionally, NDH-1 shuttles electrons from NADH, via FMN and iron-sulfur (Fe-S) centers, to quinones in the respiratory chain. The immediate electron acceptor for the enzyme in this species is believed to be ubiquinone. Couples the redox reaction to proton translocation (for every two electrons transferred, four hydrogen ions are translocated across the cytoplasmic membrane), and thus conserves the redox energy in a proton gradient. In Aeromonas salmonicida (strain A449), this protein is NADH-quinone oxidoreductase subunit K.